Here is a 595-residue protein sequence, read N- to C-terminus: S-(+)-linalool synthase, chloroplastic (595 aa).

A chloroplast-targeting transit peptide spans 1 to 46; it reads MVCHVFSSFSSSLIRVLEAPLLLPAASASSSSSSSPASRSGGRRRR. The segment covering 27–40 has biased composition (low complexity); the sequence is SASSSSSSSPASRS. The segment at 27 to 54 is disordered; the sequence is SASSSSSSSPASRSGGRRRRAAHVRPSP. (2E)-geranyl diphosphate is bound by residues Arg309, Asp346, Asp350, Arg487, and Asp490. Residues Asp346 and Asp350 each coordinate Mg(2+). A DDXXD motif motif is present at residues 346 to 350; sequence DDIFD. Residues Asp490, Ser494, and Glu498 each contribute to the Mg(2+) site.

Belongs to the terpene synthase family. Tpsb subfamily. Requires Mg(2+) as cofactor. The cofactor is Mn(2+).

The protein resides in the plastid. The protein localises to the chloroplast. The catalysed reaction is (2E)-geranyl diphosphate + H2O = (S)-linalool + diphosphate. It functions in the pathway secondary metabolite biosynthesis; terpenoid biosynthesis. Involved in monoterpene (C10) biosynthesis. The major product is S-(+)-linalool. Linalool production is induced by jasmonate in response to pathogen attack, it possesses antibacterial activity and is important for resistance to the bacterial blight pathogen Xanthomonas oryzae pv. oryzae (Xoo). Plants over-expressing linalool synthase display enhanced resistance to Xoo. The chain is S-(+)-linalool synthase, chloroplastic from Oryza sativa subsp. japonica (Rice).